Consider the following 506-residue polypeptide: uncharacterized protein (506 aa).

The protein to R.prowazekii RP789, RP027 and RP028.

This is an uncharacterized protein from Synechocystis sp. (strain ATCC 27184 / PCC 6803 / Kazusa).